A 129-amino-acid chain; its full sequence is Cytochrome b5 (129 aa).

The region spanning 8 to 84 (TTIYTHEEVA…LEKLYIGNLK (77 aa)) is the Cytochrome b5 heme-binding domain. The heme site is built by His-43 and His-67. The chain crosses the membrane as a helical span at residues 104–124 (GINFPLIAVGVFLAAFGVYYY).

Belongs to the cytochrome b5 family.

The protein resides in the endoplasmic reticulum membrane. Its subcellular location is the microsome membrane. Membrane bound hemoprotein which function as an electron carrier for several membrane bound oxygenases. This is Cytochrome b5 (Cytb5) from Candida tropicalis (Yeast).